A 682-amino-acid chain; its full sequence is DNA-directed RNA polymerase subunit beta' (682 aa).

Residues C69, C71, C87, and C90 each coordinate Zn(2+). Mg(2+) contacts are provided by D489, D491, and D493.

The protein belongs to the RNA polymerase beta' chain family. RpoC1 subfamily. In plastids the minimal PEP RNA polymerase catalytic core is composed of four subunits: alpha, beta, beta', and beta''. When a (nuclear-encoded) sigma factor is associated with the core the holoenzyme is formed, which can initiate transcription. It depends on Mg(2+) as a cofactor. Zn(2+) is required as a cofactor.

It is found in the plastid. It localises to the chloroplast. It catalyses the reaction RNA(n) + a ribonucleoside 5'-triphosphate = RNA(n+1) + diphosphate. Functionally, DNA-dependent RNA polymerase catalyzes the transcription of DNA into RNA using the four ribonucleoside triphosphates as substrates. The chain is DNA-directed RNA polymerase subunit beta' from Agrostis stolonifera (Creeping bentgrass).